The following is a 27-amino-acid chain: Caerulein precursor fragment R7 (27 aa).

Expressed by the skin glands.

It is found in the secreted. Its function is as follows. Antimicrobial peptide. This is Caerulein precursor fragment R7 from Xenopus ruwenzoriensis (Uganda clawed frog).